Consider the following 38-residue polypeptide: Photosystem II reaction center protein L (38 aa).

A helical transmembrane segment spans residues 17–37 (SLYWGLLLIFVLAVLFSSYIF).

The protein belongs to the PsbL family. PSII is composed of 1 copy each of membrane proteins PsbA, PsbB, PsbC, PsbD, PsbE, PsbF, PsbH, PsbI, PsbJ, PsbK, PsbL, PsbM, PsbT, PsbX, PsbY, PsbZ, Psb30/Ycf12, at least 3 peripheral proteins of the oxygen-evolving complex and a large number of cofactors. It forms dimeric complexes.

It localises to the plastid. The protein resides in the chloroplast thylakoid membrane. Functionally, one of the components of the core complex of photosystem II (PSII). PSII is a light-driven water:plastoquinone oxidoreductase that uses light energy to abstract electrons from H(2)O, generating O(2) and a proton gradient subsequently used for ATP formation. It consists of a core antenna complex that captures photons, and an electron transfer chain that converts photonic excitation into a charge separation. This subunit is found at the monomer-monomer interface and is required for correct PSII assembly and/or dimerization. This chain is Photosystem II reaction center protein L, found in Oltmannsiellopsis viridis (Marine flagellate).